A 143-amino-acid chain; its full sequence is Large ribosomal subunit protein uL15 (143 aa).

The tract at residues 20–52 is disordered; the sequence is GRGIGSGKGKTAGRGHKGQHSRAGGYHKVGFEG. Residues 30 to 39 show a composition bias toward basic residues; the sequence is TAGRGHKGQH.

The protein belongs to the universal ribosomal protein uL15 family. Part of the 50S ribosomal subunit.

Functionally, binds to the 23S rRNA. This Coxiella burnetii (strain CbuK_Q154) (Coxiella burnetii (strain Q154)) protein is Large ribosomal subunit protein uL15.